Here is a 259-residue protein sequence, read N- to C-terminus: Phosphate import ATP-binding protein PstB (259 aa).

The ABC transporter domain maps to 2–248 (GQRIDVNHEN…ITMFNNPQNE (247 aa)). 37 to 44 (GPSGCGKS) contributes to the ATP binding site.

This sequence belongs to the ABC transporter superfamily. Phosphate importer (TC 3.A.1.7) family. The complex is composed of two ATP-binding proteins (PstB), two transmembrane proteins (PstC and PstA) and a solute-binding protein (PstS).

It is found in the cell membrane. The catalysed reaction is phosphate(out) + ATP + H2O = ADP + 2 phosphate(in) + H(+). Its function is as follows. Part of the ABC transporter complex PstSACB involved in phosphate import. Responsible for energy coupling to the transport system. The sequence is that of Phosphate import ATP-binding protein PstB from Bifidobacterium longum (strain NCC 2705).